The sequence spans 4138 residues: Fumosorinone synthetase (4138 aa).

The Ketosynthase family 3 (KS3) domain occupies 15–455 (PEPIAIVGSA…GTNAHAIIER (441 aa)). Active-site for beta-ketoacyl synthase activity residues include C189, H328, and H375. A malonyl-CoA:ACP transacylase (MAT) domain region spans residues 590 to 921 (VFTGQGAQWP…APDAVSFSTA (332 aa)). The N-terminal hotdog fold stretch occupies residues 990–1133 (HELLGRRAVD…GLIDVHLGPR (144 aa)). Residues 990 to 1306 (HELLGRRAVD…GFEVRSVGER (317 aa)) are dehydratase (DH) domain. A PKS/mFAS DH domain is found at 990-1309 (HELLGRRAVD…VRSVGERDAA (320 aa)). H1022 acts as the Proton acceptor; for dehydratase activity in catalysis. Residues 1157 to 1309 (LQEIDCEKLY…VRSVGERDAA (153 aa)) are C-terminal hotdog fold. D1216 (proton donor; for dehydratase activity) is an active-site residue. The segment at 1456 to 1650 (RFYAEDKGMQ…FSGADHVAHD (195 aa)) is methyltransferase (MT) domain. Positions 2205 to 2379 (TYLMVGAAGG…AASIIHVGFV (175 aa)) are ketoreductase (KR) domain. The 81-residue stretch at 2507-2587 (EAAAAVRRAF…QLSTLAAKLA (81 aa)) folds into the Carrier 1 domain. S2547 carries the post-translational modification O-(pantetheine 4'-phosphoryl)serine. The disordered stretch occupies residues 2587–2683 (ARQQSPRKEG…TEPKTEDKVS (97 aa)). Over residues 2610-2621 (TQDKLVDDKEQK) the composition is skewed to basic and acidic residues. Residues 2622-2643 (VQVTSSLAKADSLTQEMQASAH) show a composition bias toward polar residues. Residues 2647-2659 (DSATNPTPSSTAS) are compositionally biased toward low complexity. A compositionally biased stretch (polar residues) spans 2664 to 2675 (SNSQSTRSTSTE). The segment at 2701 to 3128 (REAPMSAAQA…ASQRVRECAV (428 aa)) is condensation (C) domain. Positions 3162–3564 (CQKNSARTAI…DGTLLCFGRI (403 aa)) are adenylation (A) (KR) domain. Positions 3680 to 3759 (EKMTIQEGEL…GMTRCVLAQR (80 aa)) constitute a Carrier 2 domain. S3719 carries the post-translational modification O-(pantetheine 4'-phosphoryl)serine. The tract at residues 3813–4045 (LTGATGFLGG…LDFGTVDAVV (233 aa)) is reductase (RED) domain.

The protein in the C-terminal section; belongs to the NRP synthetase family.

Hybrid PKS-NRPS synthetase; part of the gene cluster that mediates the biosynthesis of fumosorinone, a 2-pyridone alkaloid that acts as an inhibitor of protein tyrosine phosphatase 1B which is implicated asa negative regulator of insulin receptor signaling and a potential drug target for the treatment of type II diabetes and other associated metabolic syndromes. The polyketide-amino acid backbone of fumosorinone is first assembled by the PKS-NRPS hybrid fumoS. The PKS modules condense one acetyl-CoA starter unit with 7 malonyl-CoA units, programmed C-methylations occurring after the first 3 and the sixth extensions, and cycles of full reduction occurring after the first 2 extensions. Because fumoS lacks a designated enoyl reductase (ER) domain, the required activity is provided the enoyl reductase fumoC. Upon formation of the polyketide backbone on the thiotemplate, the polyketide is transferred to the NRPS module and linked to tyrosine to produce the acyltetramic acid intermediate called prefumosorinone A. The cytochrome P450 monooxygenase fumoA then probably catalyzes an unprecedented oxidative ring expansion of prefumosorinone A to form prefumosorinone B which contains the 2-pyridone core of fumosorinone. The cytochrome P450 monooxygenase fumoB might hydroxylate the nitrogen of prefumosorinone B, but not the acyltetramic acid prefumosorinone A, to form fumosorinone. The protein is Fumosorinone synthetase of Cordyceps fumosorosea (strain ARSEF 2679) (Isaria fumosorosea).